The following is a 280-amino-acid chain: Virginiamycin B lyase (280 aa).

Position 215 (histidine 215) interacts with substrate. Position 254 (glutamate 254) interacts with Mg(2+). Histidine 256 serves as the catalytic Proton acceptor. Glutamate 271 contributes to the Mg(2+) binding site.

Belongs to the Vgb family. Monomer. It depends on Mg(2+) as a cofactor.

Functionally, inactivates the type B streptogramin antibiotics by linearizing the lactone ring at the ester linkage, generating a free phenylglycine carboxylate and converting the threonyl moiety into 2-amino-butenoic acid. The sequence is that of Virginiamycin B lyase from Mycobacterium sp. (strain JLS).